Here is a 373-residue protein sequence, read N- to C-terminus: P2Y purinoceptor 1 (373 aa).

Over 1-51 the chain is Extracellular; sequence MTEVPWSAVPNGTDAAFLAGLGSLWGNSTIASTAAVSSSFRCALIKTGFQF. Asn11 and Asn27 each carry an N-linked (GlcNAc...) asparagine glycan. 2 cysteine pairs are disulfide-bonded: Cys42–Cys296 and Cys124–Cys202. ADP is bound at residue Lys46. The chain crosses the membrane as a helical span at residues 52–74; it reads YYLPAVYILVFIIGFLGNSVAIW. Over 75 to 87 the chain is Cytoplasmic; sequence MFVFHMKPWSGIS. A helical transmembrane segment spans residues 88-109; sequence VYMFNLALADFLYVLTLPALIF. Residues 110-125 lie on the Extracellular side of the membrane; that stretch reads YYFNKTDWIFGDVMCK. N-linked (GlcNAc...) asparagine glycosylation is present at Asn113. A helical transmembrane segment spans residues 126-147; that stretch reads LQRFIFHVNLYGSILFLTCISA. Residues 148-166 are Cytoplasmic-facing; sequence HRYSGVVYPLKSLGRLKKK. Residues 167-188 traverse the membrane as a helical segment; that stretch reads NAIYVSVLVWLIVVVAISPILF. The Extracellular segment spans residues 189–214; the sequence is YSGTGIRKNKTVTCYDSTSDEYLRSY. Asn197 carries an N-linked (GlcNAc...) asparagine glycan. ADP is bound at residue 203-205; sequence YDS. The helical transmembrane segment at 215–237 threads the bilayer; that stretch reads FIYSMCTTVAMFCIPLVLILGCY. Topologically, residues 238–260 are cytoplasmic; that stretch reads GLIVRALIYKDLDNSPLRRKSIY. A helical membrane pass occupies residues 261–284; that stretch reads LVIIVLTVFAVSYIPFHVMKTMNL. Residues 283-287, 303-306, and Arg310 contribute to the ADP site; these read NLRAR and YATY. Over 285-303 the chain is Extracellular; that stretch reads RARLDFQTPEMCDFNDRVY. A helical membrane pass occupies residues 304–325; that stretch reads ATYQVTRGLASLNSCVDPILYF. The Cytoplasmic segment spans residues 326-373; it reads LAGDTFRRRLSRATRKASRRSEANLQSKSEEMTLNILSEFKQNGDTSL.

The protein belongs to the G-protein coupled receptor 1 family. Expressed in muscle, heart, liver, kidney, lung, brain, spleen, but not in testis.

It localises to the cell membrane. Receptor for extracellular adenine nucleotides such as ADP. In platelets, binding to ADP leads to mobilization of intracellular calcium ions via activation of phospholipase C, a change in platelet shape, and ultimately platelet aggregation. This chain is P2Y purinoceptor 1 (P2ry1), found in Rattus norvegicus (Rat).